Reading from the N-terminus, the 1181-residue chain is Katanin p80 WD40 repeat-containing subunit B1 homolog KTN80.2 (1181 aa).

7 WD repeats span residues 13–53, 56–95, 98–137, 140–181, 183–221, 224–264, and 266–303; these read AHSA…SLMS, GHTS…MVRA, GHRS…CIQT, GHSR…HEFK, HEGP…LIGS, PEAT…DGVD, and GWST…IEPY. The DWD box signature appears at 114–130; sequence FLASGSSDANLKIWDIR. Disordered stretches follow at residues 361–383, 503–597, 702–739, 754–869, and 988–1008; these read AHKS…NKSL, KPPR…ESKS, TSMA…QTRT, KMKS…VIST, and TKTQ…ISGR. 2 stretches are compositionally biased toward polar residues: residues 365–379 and 509–526; these read GSLS…QAGD and RSPS…STDS. Composition is skewed to basic and acidic residues over residues 530-553 and 569-585; these read DSKK…DDRG and RSER…ELKS. Polar residues-rich tracts occupy residues 703-739, 754-791, 822-841, and 850-859; these read SMAT…QTRT, KMKS…TRTS, SATN…QAKT, and ILNQRQTTNM. A compositionally biased stretch (basic and acidic residues) spans 998 to 1008; sequence TQKEEPQISGR.

It belongs to the WD repeat KATNB1 family. As to quaternary structure, component of KTN80-KTN1 complexes composed of a hexamer of KTN1-KTN80 heterodimers that sense microtubule (MT) geometry to confer precise MT severing. Interacts directly with AAA1/KTN1. Interacts with subunits of the CUL4-based E3 ligase complex DDB1A and DDB1B. As to expression, expressed at low levels in siliques, flowers, leaves, stems and roots.

The protein resides in the cytoplasm. It localises to the cytoskeleton. May participate in a complex which severs microtubules in an ATP-dependent manner. Microtubule severing may promote rapid reorganization of cellular microtubule arrays. Confers precision to microtubule (MT) severing by specific targeting of KTN1 to MT cleavage sites such as crossover or branching nucleation sites. Together with other KTN80s, regulates cell elongation by modulating MT organization. Negative regulator of abscisic acid (ABA) responses. May function as a substrate receptor for cullin-RING ubiquitin ligase 4 complexes (CRL4), a family of E3 ligases involved in protein degradation. The protein is Katanin p80 WD40 repeat-containing subunit B1 homolog KTN80.2 of Arabidopsis thaliana (Mouse-ear cress).